Consider the following 152-residue polypeptide: Natriuretic peptides A (152 aa).

Residues 1–24 (MGSFSITKGFFLFLAFWLPGHIGA) form the signal peptide. 2 propeptides span residues 25–122 (NPVY…AGPR) and 92–102 (DGGALGRGPWD). The interval 54-104 (DEVMPPQALSEQTDEAGAALSSLSEVPPWTGEVNPSQRDGGALGRGPWDPS) is disordered. A Phosphoserine modification is found at S128. C129 and C145 are disulfide-bonded. The segment at 146-150 (NSFRY) is important for degradation of atrial natriuretic peptide by IDE.

This sequence belongs to the natriuretic peptide family. In terms of assembly, homodimer; disulfide-linked antiparallel dimer. Post-translationally, the precursor molecule is proteolytically cleaved by CORIN at Arg-122 to produce the atrial natriuretic peptide. Undergoes further proteolytic cleavage by unknown proteases to give rise to long-acting natriuretic peptide, vessel dilator and kaliuretic peptide. Additional processing gives rise to the auriculin and atriopeptin peptides. In the kidneys, alternative processing by an unknown protease results in the peptide urodilatin. Cleavage by MME initiates degradation of the factor and thereby regulates its activity. Degradation by IDE results in reduced activation of NPR1 (in vitro). During IDE degradation, the resulting products can temporarily stimulate NPR2 to produce cGMP, before the fragments are completely degraded and inactivated by IDE (in vitro). In terms of processing, degraded by IDE. Post-translationally, phosphorylation on Ser-128 decreases vasorelaxant activity. As to expression, high levels of expression in the atria compared to the ventricles. Very low levels of expression detected in extracardiac tissues such as the brain, hypothalamus, pituitary, lung and aorta. In terms of tissue distribution, atria (at protein level). High levels of expression in the atria with very low levels of expression in the ventricles (at protein level). Relatively low levels of expression detected in the brain compared to the atria (at protein level).

The protein resides in the secreted. It localises to the perikaryon. Its subcellular location is the cell projection. Hormone that plays a key role in mediating cardio-renal homeostasis, and is involved in vascular remodeling and regulating energy metabolism. Acts by specifically binding and stimulating NPR1 to produce cGMP, which in turn activates effector proteins, such as PRKG1, that drive various biological responses. Regulates vasodilation, natriuresis, diuresis and aldosterone synthesis and is therefore essential for regulating blood pressure, controlling the extracellular fluid volume and maintaining the fluid-electrolyte balance. Also involved in inhibiting cardiac remodeling and cardiac hypertrophy by inducing cardiomyocyte apoptosis and attenuating the growth of cardiomyocytes and fibroblasts. Plays a role in female pregnancy by promoting trophoblast invasion and spiral artery remodeling in uterus, and thus prevents pregnancy-induced hypertension. In adipose tissue, acts in various cGMP- and PKG-dependent pathways to regulate lipid metabolism and energy homeostasis. This includes up-regulating lipid metabolism and mitochondrial oxygen utilization by activating the AMP-activated protein kinase (AMPK), and increasing energy expenditure by acting via MAPK11 to promote the UCP1-dependent thermogenesis of brown adipose tissue. Binds the clearance receptor NPR3 which removes the hormone from circulation. Functionally, may have a role in cardio-renal homeostasis through regulation of natriuresis, diuresis, vasodilation, and inhibiting aldosterone synthesis. In vitro, promotes the production of cGMP and induces vasodilation. May promote natriuresis, at least in part, by enhancing prostaglandin E2 synthesis resulting in the inhibition of renal Na+-K+-ATPase. However reports on the involvement of this peptide in mammal blood volume and blood pressure homeostasis are conflicting; according to a report, in vivo it is not sufficient to activate cGMP and does not inhibit collecting duct transport nor effect diuresis and natriuresis. Appears to bind to specific receptors that are distinct from the receptors bound by atrial natriuretic peptide and vessel dilator. Possibly enhances protein excretion in urine by decreasing proximal tubular protein reabsorption. Its function is as follows. May have a role in cardio-renal homeostasis through regulation of natriuresis, diuresis, and vasodilation. In vitro, promotes the production of cGMP and induces vasodilation. May promote natriuresis, at least in part, by enhancing prostaglandin E2 synthesis resulting in the inhibition of renal Na+-K+-ATPase. However reports on the involvement of this peptide in mammal blood volume and blood pressure homeostasis are conflicting; according to a report, in vivo it is not sufficient to activate cGMP and does not inhibit collecting duct transport nor effect diuresis and natriuresis. Appears to bind to specific receptors that are distinct from the receptors bound by the atrial natriuretic and long-acting natriuretic peptides. Possibly functions in protein excretion in urine by maintaining the integrity of the proximal tubules and enhancing protein excretion by decreasing proximal tubular protein reabsorption. In terms of biological role, may have a role in cardio-renal homeostasis through regulation of diuresis and inhibiting aldosterone synthesis. In vitro, promotes the production of cGMP and induces vasodilation. May promote natriuresis, at least in part, by enhancing prostaglandin E2 synthesis resulting in the inhibition of renal Na+-K+-ATPase. May have a role in potassium excretion but not sodium excretion (natriuresis). Possibly enhances protein excretion in urine by decreasing proximal tubular protein reabsorption. Hormone produced in the kidneys that appears to be important for maintaining cardio-renal homeostasis. Mediates vasodilation, natriuresis and diuresis primarily in the renal system, in order to maintain the extracellular fluid volume and control the fluid-electrolyte balance. Specifically binds and stimulates cGMP production by renal transmembrane receptors, likely NPR1. Urodilatin not ANP, may be the natriuretic peptide responsible for the regulation of sodium and water homeostasis in the kidney. Functionally, may have a role in cardio-renal homeostasis through regulation of natriuresis and vasodilation. In vivo promotes natriuresis and in vitro, vasodilates renal artery strips. Its function is as follows. May have a role in cardio-renal homeostasis through regulation of regulation of natriuresis and vasodilation. In vivo promotes natriuresis. In vitro, vasodilates intestinal smooth muscle but not smooth muscle strips. In terms of biological role, may have a role in cardio-renal homeostasis through regulation of natriuresis and vasodilation. In vivo promotes natriuresis. In vitro, selectively vasodilates intestinal and vascular smooth muscle strips. May have a role in cardio-renal homeostasis through regulation of natriuresis and vasodilation. In vivo promotes natriuresis. In vitro, selectively vasodilates intestinal smooth muscle but not vascular smooth muscle strips. The chain is Natriuretic peptides A (Nppa) from Rattus norvegicus (Rat).